A 121-amino-acid chain; its full sequence is Large ribosomal subunit protein uL18c (121 aa).

The protein belongs to the universal ribosomal protein uL18 family. As to quaternary structure, part of the 50S ribosomal subunit; contacts the 5S rRNA.

It localises to the plastid. The protein localises to the cyanelle. Binds 5S rRNA, forms part of the central protuberance of the 50S subunit. The polypeptide is Large ribosomal subunit protein uL18c (rpl18) (Cyanophora paradoxa).